The chain runs to 105 residues: MASNVTDKSFEEEVLKSDLPVLVDFWAEWCSPCRMLTPIIEEISKDLESKVKVLKMNIDENPEIPSKYGIRSIPTVMLFKNGEQKDTKVGLHQKNSLIEWINNNI.

The region spanning 1–105 is the Thioredoxin domain; that stretch reads MASNVTDKSF…SLIEWINNNI (105 aa). C30 and C33 are disulfide-bonded.

Belongs to the thioredoxin family.

In terms of biological role, component of the thioredoxin-thioredoxin reductase system. Participates in various redox reactions through the reversible oxidation of its active center dithiol to a disulfide and catalyzes dithiol-disulfide exchange reactions. The polypeptide is Thioredoxin (trxA) (Rickettsia bellii (strain RML369-C)).